The chain runs to 364 residues: Histidinol-phosphate aminotransferase (364 aa).

Residues 1-46 are disordered; sequence MQPRDLSDHSPYVPGRGVEEVARDRGLDPDDLIKLSSNENPHGPSP. Positions 17–33 are enriched in basic and acidic residues; sequence GVEEVARDRGLDPDDLI. N6-(pyridoxal phosphate)lysine is present on lysine 222.

It belongs to the class-II pyridoxal-phosphate-dependent aminotransferase family. Histidinol-phosphate aminotransferase subfamily. Pyridoxal 5'-phosphate serves as cofactor.

It catalyses the reaction L-histidinol phosphate + 2-oxoglutarate = 3-(imidazol-4-yl)-2-oxopropyl phosphate + L-glutamate. The protein operates within amino-acid biosynthesis; L-histidine biosynthesis; L-histidine from 5-phospho-alpha-D-ribose 1-diphosphate: step 7/9. The protein is Histidinol-phosphate aminotransferase of Halorubrum lacusprofundi (strain ATCC 49239 / DSM 5036 / JCM 8891 / ACAM 34).